A 346-amino-acid chain; its full sequence is Parapinopsin (346 aa).

Residues 1 to 29 are Extracellular-facing; that stretch reads MASIILINFSETDTLHLGSVNDHIMPRIG. Asn-8 carries an N-linked (GlcNAc...) asparagine glycan. Residues 30-54 traverse the membrane as a helical segment; the sequence is YTILSIIMALSSTFGIILNMVVIIV. The Cytoplasmic segment spans residues 55-66; it reads TVRYKQLRQPLN. A helical transmembrane segment spans residues 67–91; sequence YALVNLAVADLGCPVFGGLLTAVTN. The Extracellular segment spans residues 92-106; sequence AMGYFSLGRVGCVLE. Cys-103 and Cys-180 are joined by a disulfide. The helical transmembrane segment at 107–126 threads the bilayer; it reads GFAVAFFGIAGLCSVAVIAV. Over 127-145 the chain is Cytoplasmic; sequence DRYMVVCRPLGAVMFQTKH. Residues 146 to 169 traverse the membrane as a helical segment; it reads ALAGVVFSWVWSFIWNTPPLFGWG. Residues 170–193 are Extracellular-facing; it reads SYQLEGVMTSCAPNWYRRDPVNVS. Residue Asn-191 is glycosylated (N-linked (GlcNAc...) asparagine). Residues 194–221 form a helical membrane-spanning segment; sequence YILCYFMLCFALPFATIIFSYMHLLHTL. The Cytoplasmic portion of the chain corresponds to 222 to 244; that stretch reads WQVAKLQVADSGSTAKVEVQVAR. The helical transmembrane segment at 245 to 268 threads the bilayer; it reads MVVIMVMAFLLTWLPYAAFALTVI. The Extracellular segment spans residues 269–276; that stretch reads IDSNIYIN. A helical transmembrane segment spans residues 277-301; that stretch reads PVIGTIPAYLAKSSTVFNPIIYIFM. Residue Lys-288 is modified to N6-(retinylidene)lysine. The Cytoplasmic portion of the chain corresponds to 302–346; sequence NRQFRDYALPCLLCGKNPWAAKEGRDSDTNTLTTTVSKNTSVSPL. Cys-315 carries the S-palmitoyl cysteine lipid modification. Residues 325–346 form a disordered region; the sequence is GRDSDTNTLTTTVSKNTSVSPL. Over residues 330–346 the composition is skewed to low complexity; sequence TNTLTTTVSKNTSVSPL.

It belongs to the G-protein coupled receptor 1 family. Opsin subfamily. Phosphorylated on some or all of the serine and threonine residues present in the C-terminal region. As to expression, parapineal organ.

The protein localises to the membrane. The protein is Parapinopsin of Ictalurus punctatus (Channel catfish).